A 274-amino-acid chain; its full sequence is Protein RecA (274 aa).

43–50 (GPESSGKT) is a binding site for ATP.

It belongs to the RecA family.

The protein resides in the cytoplasm. Functionally, can catalyze the hydrolysis of ATP in the presence of single-stranded DNA, the ATP-dependent uptake of single-stranded DNA by duplex DNA, and the ATP-dependent hybridization of homologous single-stranded DNAs. It interacts with LexA causing its activation and leading to its autocatalytic cleavage. The sequence is that of Protein RecA from Neisseria polysaccharea.